The primary structure comprises 390 residues: Putative RING-H2 finger protein ATL12 (390 aa).

Residues 1-22 (MNSPQEISILFFFIIFLDYVSA) form the signal peptide. Residues 41–61 (LAIITGVFSIVFTLTFVLLVY) form a helical membrane-spanning segment. Residues 124 to 166 (CSVCLSKFEDVEILRLLPKCRHAFHIGCIDQWLEQHATCPLCR) form an RING-type; atypical zinc finger.

It belongs to the RING-type zinc finger family. ATL subfamily.

Its subcellular location is the membrane. It carries out the reaction S-ubiquitinyl-[E2 ubiquitin-conjugating enzyme]-L-cysteine + [acceptor protein]-L-lysine = [E2 ubiquitin-conjugating enzyme]-L-cysteine + N(6)-ubiquitinyl-[acceptor protein]-L-lysine.. The protein operates within protein modification; protein ubiquitination. This Arabidopsis thaliana (Mouse-ear cress) protein is Putative RING-H2 finger protein ATL12 (ATL12).